A 278-amino-acid chain; its full sequence is 3-methyl-2-oxobutanoate hydroxymethyltransferase (278 aa).

Mg(2+) contacts are provided by aspartate 43 and aspartate 82. 3-methyl-2-oxobutanoate-binding positions include 43-44, aspartate 82, and lysine 112; that span reads DS. Glutamate 114 contributes to the Mg(2+) binding site. Glutamate 181 serves as the catalytic Proton acceptor.

This sequence belongs to the PanB family. As to quaternary structure, homodecamer; pentamer of dimers. Mg(2+) serves as cofactor.

Its subcellular location is the cytoplasm. The catalysed reaction is 3-methyl-2-oxobutanoate + (6R)-5,10-methylene-5,6,7,8-tetrahydrofolate + H2O = 2-dehydropantoate + (6S)-5,6,7,8-tetrahydrofolate. It participates in cofactor biosynthesis; (R)-pantothenate biosynthesis; (R)-pantoate from 3-methyl-2-oxobutanoate: step 1/2. Functionally, catalyzes the reversible reaction in which hydroxymethyl group from 5,10-methylenetetrahydrofolate is transferred onto alpha-ketoisovalerate to form ketopantoate. The protein is 3-methyl-2-oxobutanoate hydroxymethyltransferase of Desulfitobacterium hafniense (strain Y51).